A 29-amino-acid chain; its full sequence is Cliotide T18 (29 aa).

Residues 1–29 constitute a cross-link (cyclopeptide (Gly-Asn)); sequence GLPICGETCFTGTCYTPGCTCSYPVCKKN. Disulfide bonds link Cys-5–Cys-19, Cys-9–Cys-21, and Cys-14–Cys-26.

Contains 3 disulfide bonds. In terms of processing, this is a cyclic peptide. Expressed in root nodules but not in seed.

Probably participates in a plant defense mechanism. The sequence is that of Cliotide T18 from Clitoria ternatea (Butterfly pea).